Here is a 336-residue protein sequence, read N- to C-terminus: Phospho-N-acetylmuramoyl-pentapeptide-transferase (336 aa).

10 helical membrane passes run 3-23 (LTLIAAIISFMVSAFTMPYFI), 53-73 (GGTVFLLVATAVSLLVSLFSI), 78-98 (SLALISGILSIVVIYGIIGFL), 118-138 (LALQLAGGLMFYFLHVSPSGI), 143-163 (VFGYQLSLGIFYLFFVLFWVV), 174-194 (GIDGLASISVVISLVTYGVIA), 200-220 (FDVLLLIGTMIGALLGFFLFN), 226-246 (VFMGDVGSLALGAMLAAISIA), 251-271 (WTLLIIGIVYVLETSSVMLQV), and 316-336 (AFLWGVGSLASLLVLAILYVF).

It belongs to the glycosyltransferase 4 family. MraY subfamily. Mg(2+) serves as cofactor.

The protein resides in the cell membrane. It carries out the reaction UDP-N-acetyl-alpha-D-muramoyl-L-alanyl-gamma-D-glutamyl-L-lysyl-D-alanyl-D-alanine + di-trans,octa-cis-undecaprenyl phosphate = Mur2Ac(oyl-L-Ala-gamma-D-Glu-L-Lys-D-Ala-D-Ala)-di-trans,octa-cis-undecaprenyl diphosphate + UMP. It functions in the pathway cell wall biogenesis; peptidoglycan biosynthesis. Its function is as follows. Catalyzes the initial step of the lipid cycle reactions in the biosynthesis of the cell wall peptidoglycan: transfers peptidoglycan precursor phospho-MurNAc-pentapeptide from UDP-MurNAc-pentapeptide onto the lipid carrier undecaprenyl phosphate, yielding undecaprenyl-pyrophosphoryl-MurNAc-pentapeptide, known as lipid I. The chain is Phospho-N-acetylmuramoyl-pentapeptide-transferase from Streptococcus pyogenes serotype M6 (strain ATCC BAA-946 / MGAS10394).